A 1173-amino-acid chain; its full sequence is 3-hydroxy-3-methylglutaryl coenzyme A reductase mlcD (1173 aa).

N-linked (GlcNAc...) asparagine glycosylation is found at asparagine 143 and asparagine 186. Positions 241 to 420 (DVVVMVLGYI…FTFYTAILSI (180 aa)) constitute an SSD domain. The next 7 helical transmembrane spans lie at 242–262 (VVVM…LFLS), 272–292 (LATS…DVAI), 302–322 (LLSE…SITL), 368–388 (NIVC…VLGI), 397–417 (VLAA…YTAI), 479–499 (FWMV…TLFQ), and 594–614 (VLSK…SYLF). Positions 498–673 (FQASSSGSLS…FTPTTTDSDS (176 aa)) are linker. The span at 647–666 (NQTPQIQSSLQAPQTRVFTP) shows a compositional bias: polar residues. Positions 647 to 669 (NQTPQIQSSLQAPQTRVFTPTTT) are disordered. Residues 674 to 1133 (DASLVLIKAS…LVKAHMAHNR (460 aa)) form a catalytic region. Glutamate 822 serves as the catalytic Charge relay system. Residue asparagine 886 is glycosylated (N-linked (GlcNAc...) asparagine). The active-site Charge relay system is the lysine 956. Residue asparagine 997 is glycosylated (N-linked (GlcNAc...) asparagine). Aspartate 1032 serves as the catalytic Charge relay system. The active-site Proton donor is histidine 1128. N-linked (GlcNAc...) asparagine glycosylation occurs at asparagine 1132. Residues 1132–1173 (NRSAPASSAPSRSVSPSGGTRTVPVPNNALRPSAAATDRARR) form a disordered region. Residues 1133 to 1148 (RSAPASSAPSRSVSPS) are compositionally biased toward low complexity.

This sequence belongs to the HMG-CoA reductase family.

It is found in the endoplasmic reticulum membrane. It catalyses the reaction (R)-mevalonate + 2 NADP(+) + CoA = (3S)-3-hydroxy-3-methylglutaryl-CoA + 2 NADPH + 2 H(+). It functions in the pathway polyketide biosynthesis. Its function is as follows. HMG-CoA reductase; part of the gene cluster that mediates the biosynthesis of compactin, also known as mevastatin or ML-236B, and which acts as a potent competitive inhibitor of HMG-CoA reductase. Compactin biosynthesis is performed in two stages. The first stage is catalyzed by the nonaketide synthase mlcA, which belongs to type I polyketide synthases and catalyzes the iterative nine-step formation of the polyketide. This PKS stage is completed by the action of dehydrogenase mlcG, which catalyzes the NADPH-dependent reduction of the unsaturated tetra-, penta- and heptaketide intermediates that arise during the mlcA-mediated biosynthesis of the nonaketide chain and leads to dihydro-ML-236C carboxylate. Covalently bound dihydro-ML-236C carboxylate is released from mlcA by the mlcF esterase. Conversion of dihydro-ML-236C carboxylate into ML-236A carboxylate is subsequently performed with the participation of molecular oxygen and P450 monoogygenase mlcC. Finally, mlcH performs the conversion of ML-236A carboxylate to ML-236B/compactin carboxylate through the addition of the side-chain diketide moiety produced by the diketide synthase mlcB. HMG-CoA reductase mlcD may act as a down-regulator of compactin production and is involved in conferring resistance to ML-236B/compactin. The chain is 3-hydroxy-3-methylglutaryl coenzyme A reductase mlcD from Penicillium citrinum.